A 1705-amino-acid chain; its full sequence is Rho guanine nucleotide exchange factor 28 (1705 aa).

Disordered regions lie at residues arginine 287–glutamate 316 and lysine 473–threonine 524. A phosphoserine mark is found at serine 313 and serine 478. Residues proline 501–glycine 510 are compositionally biased toward polar residues. A Phosphoserine modification is found at serine 624. The segment at methionine 630 to lysine 649 is disordered. Positions lysine 640 to lysine 649 are enriched in basic and acidic residues. The Phorbol-ester/DAG-type zinc finger occupies arginine 652 to cysteine 699. Polar residues-rich tracts occupy residues asparagine 710–phenylalanine 721 and valine 759–glutamate 775. Residues asparagine 710–proline 800 are disordered. The span at glutamate 777–glutamate 791 shows a compositional bias: basic and acidic residues. A DH domain is found at lysine 849 to lysine 1044. One can recognise a PH domain in the interval threonine 1086 to glutamate 1188. A disordered region spans residues valine 1187–lysine 1207. The segment covering proline 1191 to lysine 1207 has biased composition (basic and acidic residues). The interval alanine 1295 to cysteine 1304 is interaction with PTK2/FAK1; required for regulation of axonal branching and synapse formation. The tract at residues threonine 1312–valine 1339 is disordered. The segment at isoleucine 1372–leucine 1383 is mediates cytoplasmic retention and interaction with YWHAH. The interval glutamine 1425–leucine 1705 is interaction with microtubules. Positions arginine 1488–glutamine 1525 form a coiled coil. The RNA-binding stretch occupies residues glutamine 1496–leucine 1527. Serine 1538 carries the post-translational modification Phosphoserine. Residues phenylalanine 1566–phenylalanine 1579 are mediates cytoplasmic retention and interaction with MAPK8IP1. A disordered region spans residues proline 1638–leucine 1705. Positions glutamate 1641–histidine 1655 are enriched in basic and acidic residues. Over residues threonine 1656 to proline 1669 the composition is skewed to polar residues. Positions threonine 1688–lysine 1699 are enriched in basic and acidic residues.

Homooligomer; forms cytoplasmic aggregates. Forms a complex with MAPK8 and MAPK8IP1. Interacts with RHOA. Interacts with microtubules. Interacts with YWHAE and YWHAH. Interacts with PTK2/FAK1. Interacts with NEFL. Interacts with CTNND2; prevents interaction with RHOA. Phosphorylated on tyrosine upon stimulation of cells by laminin.

Its subcellular location is the cytoplasm. It localises to the cell membrane. Its function is as follows. Functions as a RHOA-specific guanine nucleotide exchange factor regulating signaling pathways downstream of integrins and growth factor receptors. Functions in axonal branching, synapse formation and dendritic morphogenesis. Also functions in focal adhesion formation, cell motility and B-lymphocytes activation. May regulate NEFL expression and aggregation and play a role in apoptosis. This Homo sapiens (Human) protein is Rho guanine nucleotide exchange factor 28 (ARHGEF28).